The following is a 321-amino-acid chain: Glucokinase (321 aa).

ATP is bound at residue 8-13; that stretch reads GDVGGT.

This sequence belongs to the bacterial glucokinase family.

The protein localises to the cytoplasm. It carries out the reaction D-glucose + ATP = D-glucose 6-phosphate + ADP + H(+). This Enterobacter sp. (strain 638) protein is Glucokinase.